We begin with the raw amino-acid sequence, 215 residues long: Cytochrome b6 (215 aa).

Residues 32 to 52 (IFYCLGGITLTCFLVQVATGF) form a helical membrane-spanning segment. C35 is a heme c binding site. Heme b-binding residues include H86 and H100. Transmembrane regions (helical) follow at residues 90-110 (ASMM…TGGF), 116-136 (LTWV…VTGY), and 186-206 (LHTF…FLMI). Residues H187 and H202 each contribute to the heme b site.

Belongs to the cytochrome b family. PetB subfamily. In terms of assembly, the 4 large subunits of the cytochrome b6-f complex are cytochrome b6, subunit IV (17 kDa polypeptide, PetD), cytochrome f and the Rieske protein, while the 4 small subunits are PetG, PetL, PetM and PetN. The complex functions as a dimer. Heme b is required as a cofactor. It depends on heme c as a cofactor.

Its subcellular location is the plastid. It localises to the chloroplast thylakoid membrane. Functionally, component of the cytochrome b6-f complex, which mediates electron transfer between photosystem II (PSII) and photosystem I (PSI), cyclic electron flow around PSI, and state transitions. In Physcomitrium patens (Spreading-leaved earth moss), this protein is Cytochrome b6.